We begin with the raw amino-acid sequence, 447 residues long: Methylenetetrahydrofolate--tRNA-(uracil-5-)-methyltransferase TrmFO (447 aa).

13-18 (GAGLAG) is an FAD binding site.

It belongs to the MnmG family. TrmFO subfamily. It depends on FAD as a cofactor.

The protein localises to the cytoplasm. It catalyses the reaction uridine(54) in tRNA + (6R)-5,10-methylene-5,6,7,8-tetrahydrofolate + NADH + H(+) = 5-methyluridine(54) in tRNA + (6S)-5,6,7,8-tetrahydrofolate + NAD(+). It carries out the reaction uridine(54) in tRNA + (6R)-5,10-methylene-5,6,7,8-tetrahydrofolate + NADPH + H(+) = 5-methyluridine(54) in tRNA + (6S)-5,6,7,8-tetrahydrofolate + NADP(+). In terms of biological role, catalyzes the folate-dependent formation of 5-methyl-uridine at position 54 (M-5-U54) in all tRNAs. The chain is Methylenetetrahydrofolate--tRNA-(uracil-5-)-methyltransferase TrmFO from Streptococcus thermophilus (strain CNRZ 1066).